Consider the following 59-residue polypeptide: UPF0434 protein LHK_01103 (59 aa).

This sequence belongs to the UPF0434 family.

This chain is UPF0434 protein LHK_01103, found in Laribacter hongkongensis (strain HLHK9).